The primary structure comprises 101 residues: Urease subunit beta (101 aa).

This sequence belongs to the urease beta subunit family. Heterotrimer of UreA (gamma), UreB (beta) and UreC (alpha) subunits. Three heterotrimers associate to form the active enzyme.

The protein resides in the cytoplasm. The enzyme catalyses urea + 2 H2O + H(+) = hydrogencarbonate + 2 NH4(+). Its pathway is nitrogen metabolism; urea degradation; CO(2) and NH(3) from urea (urease route): step 1/1. In Pseudomonas fluorescens (strain SBW25), this protein is Urease subunit beta.